A 283-amino-acid chain; its full sequence is Movement protein (283 aa).

The segment at 233–283 is disordered; the sequence is SVKRTKSENTPGKRRVNVDSVSLGLGKGKSVSAKNEDTESVFDDGILDSDS. Acidic residues predominate over residues 270 to 283; it reads TESVFDDGILDSDS.

This sequence belongs to the tobamovirus movement protein family.

The protein localises to the host cytoplasm. It is found in the host cytoskeleton. The protein resides in the host cell junction. It localises to the host plasmodesma. Functionally, transports viral genome to neighboring plant cells directly through plasmosdesmata, without any budding. The movement protein allows efficient cell to cell propagation, by bypassing the host cell wall barrier. Forms a ribonucleoprotein complex with viral RNA. Binds microtubules and modulates microtubule stability. Can bind double-stranded DNA. In Crotalaria juncea (Sunn hemp), this protein is Movement protein (MP).